Reading from the N-terminus, the 758-residue chain is Solute carrier family 26 member 6 (758 aa).

Residues 1–117 (MGLPDGSDQG…PQGLAYALLA (117 aa)) lie on the Cytoplasmic side of the membrane. The chain crosses the membrane as a helical span at residues 118-138 (GLPPMFGLYSSFYPVFIYFLF). At 139–187 (GTSRHISVGTFAVMSVMVGSVTESLTADKAFVQGLNATADDARVQVAYT) the chain is on the extracellular side. An N-linked (GlcNAc) asparagine glycan is attached at Asn-174. The chain crosses the membrane as a helical span at residues 188–208 (LSFLVGLFQVGLGLVHFGFVV). Residues 209–263 (TYLSEPLVRSYTTAASVQVLVSQLKYVFGIKLSSHSGPLSVIYTVLEVCAQLPET) are Cytoplasmic-facing. The helical transmembrane segment at 264–284 (VPGTVVTAIVAGVALVLVKLL) threads the bilayer. The Extracellular segment spans residues 285-292 (NEKLHRRL). A helical transmembrane segment spans residues 293–313 (PLPIPGELLTLIGATGISYGV). Over 314-340 (KLNDRFKVDVVGNITTGLIPPVAPKTE) the chain is Cytoplasmic. The chain crosses the membrane as a helical span at residues 341-361 (LFATLVGNAFAIAVVGFAIAI). Residues 362–380 (SLGKIFALRHGYRVDSNQE) lie on the Extracellular side of the membrane. A helical membrane pass occupies residues 381–401 (LVALGLSNLIGGFFQCFPVSC). The Cytoplasmic segment spans residues 402 to 417 (SMSRSLVQESTGGNTQ). Residues 418-438 (VAGAVSSLFILLIIVKLGELF) traverse the membrane as a helical segment. Residues 439–485 (RDLPKAVLAAVIIVNLKGMMKQFSDICSLWKANRVDLLIWLVTFVAT) lie on the Extracellular side of the membrane. A helical transmembrane segment spans residues 486–506 (ILLNLDIGLAVSIVFSLLLVV). Residues 507 to 758 (VRMQLPHYSV…PKSPVLATKL (252 aa)) lie on the Cytoplasmic side of the membrane. An STAS domain is found at 531-741 (EYSGAKEVPG…ASVHDAVTFA (211 aa)). The disordered stretch occupies residues 585 to 608 (EMKLKRMKKAKKSQKQDASSKISS). At Ser-751 the chain carries Phosphoserine.

Interacts (via C-terminal domain) with PDZK1 (via C-terminal PDZ domain); the interaction induces chloride and oxalate exchange transport. Interacts with CFTR, SLC26A3 and NHERF1. Interacts with AHCYL1; the interaction increases SLC26A6 activity. Post-translationally, N-glycosylated. Glycosylation at Asn-174 positively regulates its chloride oxalate exchanger activity. As to expression, expressed in kidney (at protein level). Expressed in spermatogenic cells. Expressed in intestine, kidney, testis, brain, muscle, heart, and stomach. Expressed in the submandibular and sublingual salivary glands. In terms of tissue distribution, highly expressed in stomach, kidney, heart and small intestine, low in the lung, liver, testis, brain, skeletal muscle and colon. Expressed in the heart.

It localises to the cell membrane. It is found in the apical cell membrane. The protein resides in the cytoplasmic vesicle membrane. Its subcellular location is the microsome. The catalysed reaction is 2 hydrogencarbonate(in) + chloride(out) = 2 hydrogencarbonate(out) + chloride(in). It carries out the reaction oxalate(in) + chloride(out) = oxalate(out) + chloride(in). It catalyses the reaction oxalate(in) + formate(out) = oxalate(out) + formate(in). The enzyme catalyses oxalate(in) + sulfate(out) = oxalate(out) + sulfate(in). The catalysed reaction is formate(in) + chloride(out) = formate(out) + chloride(in). It carries out the reaction sulfate(in) = sulfate(out). Apical membrane chloride-bicarbonate exchange activity of the pancreatic duct is inhibited by 4,4'-diisothiocyanatostilbene-2,2'-disulfonic acid (DIDS). Oxalate secretion in the duodenum and chloride-formate exchange activity is inhibited by DIDS. Its activity is regulated as follows. Chloride-formate exchange activity and transcellular sulfate absorption is inhibited by 4,4'-diisothiocyanatostilbene-2,2'-disulfonic acid (DIDS). Its function is as follows. Apical membrane anion-exchanger with wide epithelial distribution that plays a role as a component of the pH buffering system for maintaining acid-base homeostasis. Acts as a versatile DIDS-sensitive inorganic and organic anion transporter that mediates the uptake of monovalent anions like chloride, bicarbonate, formate and hydroxyl ion and divalent anions like sulfate and oxalate. Functions in multiple exchange modes involving pairs of these anions, which include chloride-bicarbonate, chloride-oxalate, oxalate-formate, oxalate-sulfate and chloride-formate exchange. Apical membrane chloride-bicarbonate exchanger that mediates luminal chloride absorption and bicarbonate secretion by the small intestinal brush border membrane and contributes to intracellular pH regulation in the duodenal upper villous epithelium during proton-coupled peptide absorption, possibly by providing a bicarbonate import pathway. Its association with carbonic anhydrase CA2 forms a bicarbonate transport metabolon; hence maximizes the local concentration of bicarbonate at the transporter site. Also mediates intestinal chloride absorption and oxalate secretion, thereby preventing hyperoxaluria and calcium oxalate urolithiasis. Transepithelial oxalate secretion, chloride-formate, chloride-oxalate and chloride-bicarbonate transport activities in the duodenum are inhibited by PKC activation in a calcium-independent manner. The apical membrane chloride-bicarbonate exchanger also provides a major route for fluid and bicarbonate secretion into the proximal tubules of the kidney as well as into the proximal part of the interlobular pancreatic ductal tree, where it mediates electrogenic chloride-bicarbonate exchange with a chloride-bicarbonate stoichiometry of 1:2, and hence will dilute and alkalinize protein-rich acinar secretion. Also mediates the transcellular sulfate absorption and oxalate secretion across the apical membrane in the duodenum and the formate ion efflux at the apical brush border of cells in the proximal tubules of kidney. Plays a role in sperm capacitation by increasing intracellular pH. In terms of biological role, mediates electrogenic chloride-bicarbonate exchange with a chloride-bicarbonate stoichiometry of 1:2. Also mediates exchange of chloride-formate and chloride-oxalate ions. Mediates transcellular sulfate absorption. In Mus musculus (Mouse), this protein is Solute carrier family 26 member 6.